A 516-amino-acid chain; its full sequence is GMP synthase [glutamine-hydrolyzing] (516 aa).

Residues 7–203 (SVIVLDFGSQ…LIDIAGITPD (197 aa)) form the Glutamine amidotransferase type-1 domain. Residue Cys84 is the Nucleophile of the active site. Active-site residues include His177 and Glu179. A GMPS ATP-PPase domain is found at 204-391 (WSPKSFIQHQ…LGIAEDILMR (188 aa)). 231 to 237 (SGGVDST) serves as a coordination point for ATP.

Homodimer.

The catalysed reaction is XMP + L-glutamine + ATP + H2O = GMP + L-glutamate + AMP + diphosphate + 2 H(+). The protein operates within purine metabolism; GMP biosynthesis; GMP from XMP (L-Gln route): step 1/1. In terms of biological role, catalyzes the synthesis of GMP from XMP. The protein is GMP synthase [glutamine-hydrolyzing] of Chlorobaculum tepidum (strain ATCC 49652 / DSM 12025 / NBRC 103806 / TLS) (Chlorobium tepidum).